Reading from the N-terminus, the 355-residue chain is Glutamine synthetase root isozyme 4 (355 aa).

The GS beta-grasp domain maps to 19–99 (IIAEYIWIGG…VMCDCYTPAG (81 aa)). The interval 37–66 (ARTLPGPVTDPSKLPKWNYDGSSTGQAPGE) is disordered. The region spanning 106 to 355 (KRYSAAKIFS…IAETTIVWKP (250 aa)) is the GS catalytic domain.

This sequence belongs to the glutamine synthetase family. As to quaternary structure, homooctamer. As to expression, found in all the tissues examined with higher expression found in tissues of the root, stem and seedling shoot.

It is found in the cytoplasm. It catalyses the reaction L-glutamate + NH4(+) + ATP = L-glutamine + ADP + phosphate + H(+). Plays a role in the flow of nitrogen into nitrogenous organic compounds. The polypeptide is Glutamine synthetase root isozyme 4 (GLN5) (Zea mays (Maize)).